A 295-amino-acid polypeptide reads, in one-letter code: WHI2-like protein P4H10.16c (295 aa).

This sequence belongs to the WHI2 family.

It localises to the cytoplasm. Its subcellular location is the nucleus. This chain is WHI2-like protein P4H10.16c, found in Schizosaccharomyces pombe (strain 972 / ATCC 24843) (Fission yeast).